The following is a 161-amino-acid chain: Transcriptional repressor NrdR (161 aa).

The segment at 3 to 34 is a zinc-finger region; sequence CPYCGARDARVIDSRELNGGESIRRRRECIAC. Residues 49–139 enclose the ATP-cone domain; it reads LMVVKRDGRR…VYRRFADLED (91 aa).

This sequence belongs to the NrdR family. It depends on Zn(2+) as a cofactor.

Functionally, negatively regulates transcription of bacterial ribonucleotide reductase nrd genes and operons by binding to NrdR-boxes. The polypeptide is Transcriptional repressor NrdR (Thermomicrobium roseum (strain ATCC 27502 / DSM 5159 / P-2)).